The sequence spans 1374 residues: Y' element ATP-dependent helicase YLL066C (1374 aa).

A disordered region spans residues 321 to 345 (AGEAASSDHDQKISRVTRKRPREPK). The Helicase ATP-binding domain maps to 375–552 (EIYMADTPSV…LQRIGLTGLA (178 aa)). 388–395 (APPGYGKT) lines the ATP pocket. The short motif at 498–501 (DEFH) is the DEAH box element. The Helicase C-terminal domain maps to 609-758 (KLLLALFEIE…EFYGLESKKG (150 aa)). Residues 832 to 975 (ANASTNATTN…ATTTESTNAS (144 aa)) are compositionally biased toward low complexity. The tract at residues 832–999 (ANASTNATTN…RFHPVTDINK (168 aa)) is disordered. The span at 976 to 999 (AKEDANKDGNAEDNRFHPVTDINK) shows a compositional bias: basic and acidic residues.

The protein belongs to the helicase family. Yeast subtelomeric Y' repeat subfamily.

Catalyzes DNA unwinding and is involved in telomerase-independent telomere maintenance. This is Y' element ATP-dependent helicase YLL066C from Saccharomyces cerevisiae (strain ATCC 204508 / S288c) (Baker's yeast).